The chain runs to 364 residues: Chorismate synthase (364 aa).

2 residues coordinate NADP(+): R48 and R54. FMN contacts are provided by residues 125-127, G282, 297-301, and R323; these read RSS and KPPAS.

This sequence belongs to the chorismate synthase family. As to quaternary structure, homotetramer. Requires FMNH2 as cofactor.

The enzyme catalyses 5-O-(1-carboxyvinyl)-3-phosphoshikimate = chorismate + phosphate. It functions in the pathway metabolic intermediate biosynthesis; chorismate biosynthesis; chorismate from D-erythrose 4-phosphate and phosphoenolpyruvate: step 7/7. In terms of biological role, catalyzes the anti-1,4-elimination of the C-3 phosphate and the C-6 proR hydrogen from 5-enolpyruvylshikimate-3-phosphate (EPSP) to yield chorismate, which is the branch point compound that serves as the starting substrate for the three terminal pathways of aromatic amino acid biosynthesis. This reaction introduces a second double bond into the aromatic ring system. The sequence is that of Chorismate synthase from Chloroflexus aggregans (strain MD-66 / DSM 9485).